A 176-amino-acid chain; its full sequence is ATP-dependent protease subunit HslV (176 aa).

Thr-6 is an active-site residue. Positions 161, 164, and 167 each coordinate Na(+).

This sequence belongs to the peptidase T1B family. HslV subfamily. In terms of assembly, a double ring-shaped homohexamer of HslV is capped on each side by a ring-shaped HslU homohexamer. The assembly of the HslU/HslV complex is dependent on binding of ATP.

The protein resides in the cytoplasm. The enzyme catalyses ATP-dependent cleavage of peptide bonds with broad specificity.. Its activity is regulated as follows. Allosterically activated by HslU binding. Its function is as follows. Protease subunit of a proteasome-like degradation complex believed to be a general protein degrading machinery. The polypeptide is ATP-dependent protease subunit HslV (Pseudothermotoga lettingae (strain ATCC BAA-301 / DSM 14385 / NBRC 107922 / TMO) (Thermotoga lettingae)).